The primary structure comprises 891 residues: DNA mismatch repair protein MutS (891 aa).

634 to 641 (GPNMGGKS) provides a ligand contact to ATP.

This sequence belongs to the DNA mismatch repair MutS family.

Functionally, this protein is involved in the repair of mismatches in DNA. It is possible that it carries out the mismatch recognition step. This protein has a weak ATPase activity. The sequence is that of DNA mismatch repair protein MutS from Burkholderia pseudomallei (strain 1106a).